Here is a 110-residue protein sequence, read N- to C-terminus: Histone H2A.1 (110 aa).

It belongs to the histone H2A family. As to quaternary structure, the nucleosome is a histone octamer containing two molecules each of H2A, H2B, H3 and H4 assembled in one H3-H4 heterotetramer and two H2A-H2B heterodimers. The octamer wraps approximately 147 bp of DNA. As to expression, expressed in the generative cell within the bicellular pollen. Not detected in other reproductive or vegetative tissues.

The protein localises to the nucleus. The protein resides in the chromosome. Its function is as follows. Core component of nucleosome. Nucleosomes wrap and compact DNA into chromatin, limiting DNA accessibility to the cellular machineries which require DNA as a template. Histones thereby play a central role in transcription regulation, DNA repair, DNA replication and chromosomal stability. DNA accessibility is regulated via a complex set of post-translational modifications of histones, also called histone code, and nucleosome remodeling. This chain is Histone H2A.1 (gcH2A), found in Lilium longiflorum (Trumpet lily).